We begin with the raw amino-acid sequence, 424 residues long: Histidine--tRNA ligase (424 aa).

This sequence belongs to the class-II aminoacyl-tRNA synthetase family. As to quaternary structure, homodimer.

The protein localises to the cytoplasm. It carries out the reaction tRNA(His) + L-histidine + ATP = L-histidyl-tRNA(His) + AMP + diphosphate + H(+). The sequence is that of Histidine--tRNA ligase from Shewanella frigidimarina (strain NCIMB 400).